A 628-amino-acid polypeptide reads, in one-letter code: Hepatocyte nuclear factor 1-alpha (628 aa).

The interval 1-31 (MVSKLSQLQTELLAALLESGLSKEALIQALG) is dimerization. Residues 1–32 (MVSKLSQLQTELLAALLESGLSKEALIQALGE) enclose the HNF-p1 domain. The segment at 47 to 79 (GESCGGTRGDLTELPNGLGETRGSEDDTDDDGE) is disordered. Ser70 is subject to Phosphoserine. Thr74 is modified (phosphothreonine). Positions 87 to 182 (KELENLSPEE…VAQQFTHAGQ (96 aa)) constitute a POU-specific atypical domain. Ser93 carries the post-translational modification Phosphoserine. Lys117 participates in a covalent cross-link: Glycyl lysine isopeptide (Lys-Gly) (interchain with G-Cter in ubiquitin). 4 interaction with DNA regions span residues 130–132 (QRE), 143–149 (HLSQHLN), 155–158 (KTQK), and 203–206 (RFKW). Residues 183 to 205 (GGLIEEPTGDELPTKKGRRNRFK) are disordered. Positions 197–205 (KKGRRNRFK) match the Nuclear localization signal motif. Positions 199 to 279 (GRRNRFKWGP…NRRKEEAFRH (81 aa)) form a DNA-binding region, homeobox; HNF1-type. Residue Ser247 is modified to Phosphoserine. Interaction with DNA regions lie at residues 263 to 265 (RVY) and 270 to 273 (NRRK). 2 disordered regions span residues 284 to 338 (DTYN…SSSG) and 541 to 585 (FTSD…LSTS). The segment covering 288 to 298 (GPPPGPGPGPA) has biased composition (pro residues). Ser313 is subject to Phosphoserine. Composition is skewed to polar residues over residues 324-338 (QSATSEAAEVPSSSG) and 558-575 (SPATTIHIPSQDPSNIQH).

It belongs to the HNF1 homeobox family. As to quaternary structure, binds DNA as a dimer. Heterotetramer with PCBD1; formed by a dimer of dimers. Interacts with PCBD1. Interacts with BHLHE41. Interacts with NR5A2. Interacts with SPOP; this interaction promotes ubiquitination and degradation of HNF1A. In terms of processing, ubiquitinated in s SPOP-dependent manner; leading to prteasomal degradation. In terms of tissue distribution, liver.

Its subcellular location is the nucleus. Functionally, transcriptional activator that regulates the tissue specific expression of multiple genes, especially in pancreatic islet cells and in liver. Binds to the inverted palindrome 5'-GTTAATNATTAAC-3'. Activates the transcription of CYP1A2, CYP2E1 and CYP3A11. In Rattus norvegicus (Rat), this protein is Hepatocyte nuclear factor 1-alpha (Hnf1a).